Here is an 84-residue protein sequence, read N- to C-terminus: Small ribosomal subunit protein uS17 (84 aa).

This sequence belongs to the universal ribosomal protein uS17 family. As to quaternary structure, part of the 30S ribosomal subunit.

In terms of biological role, one of the primary rRNA binding proteins, it binds specifically to the 5'-end of 16S ribosomal RNA. The chain is Small ribosomal subunit protein uS17 from Vibrio parahaemolyticus serotype O3:K6 (strain RIMD 2210633).